The chain runs to 128 residues: Large ribosomal subunit protein eL22 (128 aa).

The protein belongs to the eukaryotic ribosomal protein eL22 family. Component of the large ribosomal subunit.

The protein resides in the cytoplasm. Its function is as follows. Component of the large ribosomal subunit. The ribosome is a large ribonucleoprotein complex responsible for the synthesis of proteins in the cell. The protein is Large ribosomal subunit protein eL22 (RPL22) of Gallus gallus (Chicken).